We begin with the raw amino-acid sequence, 327 residues long: GTP 3',8-cyclase (327 aa).

A Radical SAM core domain is found at 7–232 (HHDRQFRYLR…IKRDRTAGPA (226 aa)). Arginine 16 lines the GTP pocket. [4Fe-4S] cluster is bound by residues cysteine 23 and cysteine 27. Tyrosine 29 lines the S-adenosyl-L-methionine pocket. Residue cysteine 30 participates in [4Fe-4S] cluster binding. Arginine 66 is a binding site for GTP. Glycine 70 serves as a coordination point for S-adenosyl-L-methionine. Residue threonine 97 coordinates GTP. Serine 121 is an S-adenosyl-L-methionine binding site. Lysine 158 lines the GTP pocket. Methionine 192 serves as a coordination point for S-adenosyl-L-methionine. [4Fe-4S] cluster-binding residues include cysteine 255 and cysteine 258. 260 to 262 (RLR) provides a ligand contact to GTP. Cysteine 272 contacts [4Fe-4S] cluster.

The protein belongs to the radical SAM superfamily. MoaA family. As to quaternary structure, monomer and homodimer. [4Fe-4S] cluster is required as a cofactor.

The enzyme catalyses GTP + AH2 + S-adenosyl-L-methionine = (8S)-3',8-cyclo-7,8-dihydroguanosine 5'-triphosphate + 5'-deoxyadenosine + L-methionine + A + H(+). It functions in the pathway cofactor biosynthesis; molybdopterin biosynthesis. In terms of biological role, catalyzes the cyclization of GTP to (8S)-3',8-cyclo-7,8-dihydroguanosine 5'-triphosphate. This is GTP 3',8-cyclase from Synechococcus elongatus (strain ATCC 33912 / PCC 7942 / FACHB-805) (Anacystis nidulans R2).